Here is an 81-residue protein sequence, read N- to C-terminus: U-poneritoxin(01)-Om6a (81 aa).

The signal sequence occupies residues 1-21 (MRRSYVLLAFAIVLIISIISA). Residues 22–43 (QVEADASSDAFADAVADAVADP) constitute a propeptide that is removed on maturation. The residue at position 79 (Ala-79) is an Alanine amide.

The protein belongs to the formicidae venom precursor-01 superfamily. Truncated sequences of this peptide have also been found in the venom. It is possible they have been cleaved in the venom. Expressed by the venom gland.

It is found in the secreted. In terms of biological role, cationic amphipathic alpha-helical peptide with antimicrobial activities against E.coli (MIC=3.1), and S.aureus (MIC=3.1 uM). Also shows histamine-releasing activity (33.6% at 10 uM). Does not have activity against S.cerevisiae. Does not show hemolytic activity, even at 50 uM. This chain is U-poneritoxin(01)-Om6a, found in Odontomachus monticola (Trap-jaw ant).